The primary structure comprises 304 residues: m7GpppX diphosphatase (304 aa).

Residues Glu152, Lys174, and 235-246 each bind substrate; that span reads HYLPSYYHLHVH. The Histidine triad motif motif lies at 242-246; sequence HLHVH. His244 (nucleophile) is an active-site residue.

It belongs to the HIT family.

Its subcellular location is the cytoplasm. The protein resides in the nucleus. The catalysed reaction is a 5'-end (N(7)-methyl 5'-triphosphoguanosine)-ribonucleoside in mRNA + H2O = N(7)-methyl-GMP + a 5'-end diphospho-ribonucleoside in mRNA + 2 H(+). Its function is as follows. Decapping scavenger enzyme that catalyzes the cleavage of a residual cap structure following the degradation of mRNAs by the 3'-&gt;5' exosome-mediated mRNA decay pathway. Hydrolyzes cap analog structures like 7-methylguanosine nucleoside triphosphate (m7GpppG) with up to 10 nucleotide substrates (small capped oligoribonucleotides) and specifically releases 5'-phosphorylated RNA fragments and 7-methylguanosine monophosphate (m7GMP). Has no activity towards mRNA molecules longer than 25 nucleotides. May also play a role in the 5'-&gt;3 mRNA decay pathway; m7GDP, the downstream product released by the 5'-&gt;3' mRNA mediated decapping activity, may be also converted by DCS1 to m7GMP. Inhibits mRNA translation. Binds to the m7GpppG cap analog. This Schizosaccharomyces pombe (strain 972 / ATCC 24843) (Fission yeast) protein is m7GpppX diphosphatase (nhm1).